The sequence spans 712 residues: DNA ligase (712 aa).

NAD(+) is bound by residues 53-57 (DAEFD), 103-104 (SL), and glutamate 133. Catalysis depends on lysine 135, which acts as the N6-AMP-lysine intermediate. NAD(+)-binding residues include arginine 156, glutamate 196, lysine 315, and lysine 339. Zn(2+) contacts are provided by cysteine 433, cysteine 436, cysteine 452, and cysteine 458. The 90-residue stretch at 622–711 (SIERTLEGLS…PERDAEDGEP (90 aa)) folds into the BRCT domain.

The protein belongs to the NAD-dependent DNA ligase family. LigA subfamily. Requires Mg(2+) as cofactor. Mn(2+) serves as cofactor.

It catalyses the reaction NAD(+) + (deoxyribonucleotide)n-3'-hydroxyl + 5'-phospho-(deoxyribonucleotide)m = (deoxyribonucleotide)n+m + AMP + beta-nicotinamide D-nucleotide.. DNA ligase that catalyzes the formation of phosphodiester linkages between 5'-phosphoryl and 3'-hydroxyl groups in double-stranded DNA using NAD as a coenzyme and as the energy source for the reaction. It is essential for DNA replication and repair of damaged DNA. The chain is DNA ligase from Mycolicibacterium gilvum (strain PYR-GCK) (Mycobacterium gilvum (strain PYR-GCK)).